We begin with the raw amino-acid sequence, 649 residues long: DNA mismatch repair protein MutL (649 aa).

Belongs to the DNA mismatch repair MutL/HexB family.

In terms of biological role, this protein is involved in the repair of mismatches in DNA. It is required for dam-dependent methyl-directed DNA mismatch repair. May act as a 'molecular matchmaker', a protein that promotes the formation of a stable complex between two or more DNA-binding proteins in an ATP-dependent manner without itself being part of a final effector complex. The chain is DNA mismatch repair protein MutL from Streptococcus pneumoniae serotype 2 (strain D39 / NCTC 7466).